Consider the following 770-residue polypeptide: Probable zinc transporter protein DDB_G0291141 (770 aa).

Residues 1-36 are Cytoplasmic-facing; the sequence is MAGSLDDSIYNNGRSGGGGGGFKFSKGFNKDSISKR. The chain crosses the membrane as a helical span at residues 37–57; sequence IIMMLFFSKGIRAWSCIILLY. At 58 to 62 the chain is on the extracellular side; it reads FLQSS. The chain crosses the membrane as a helical span at residues 63–83; the sequence is ISIISASFYMCLFSAIFSVVV. Residues 84 to 100 lie on the Cytoplasmic side of the membrane; the sequence is EKPWNLLSSLRPSQIKK. The chain crosses the membrane as a helical span at residues 101–117; sequence IIYHSIFNLLIIITWNS. Residues 118 to 123 lie on the Extracellular side of the membrane; sequence SIKFIG. A helical transmembrane segment spans residues 124–146; that stretch reads PIGSILASDYTFSTYPLIFNSLL. Residues 147-154 are Cytoplasmic-facing; the sequence is QGNFLATD. Residues 155–175 traverse the membrane as a helical segment; that stretch reads MSRGSIMLMIGYFLIPLFGIS. The Extracellular portion of the chain corresponds to 176-184; that stretch reads NRLDILGYT. Residues 185–205 form a helical membrane-spanning segment; it reads SSQVFMIGLFSLIVHNVLVLW. The Cytoplasmic segment spans residues 206 to 224; it reads KKTIVRSWNSGSSGGKNKL. Residues 225 to 245 form a helical membrane-spanning segment; that stretch reads SSLGSCVSTIILFVFKLFEGF. Over 246 to 262 the chain is Extracellular; the sequence is SSGSSGSDSINQVSYSQ. The chain crosses the membrane as a helical span at residues 263-283; that stretch reads LFVIAIITFILYSLNQFIDDV. Residues 284-291 are Cytoplasmic-facing; sequence SEKELTFN. The chain crosses the membrane as a helical span at residues 292-312; sequence VLSKVSLTSSVIFGLLAALFI. Residues 313 to 316 are Extracellular-facing; that stretch reads GFKD. The helical transmembrane segment at 317-337 threads the bilayer; that stretch reads FFHPILILSFIFIINAIHILY. At 338-404 the chain is on the cytoplasmic side; that stretch reads SKSNDIQPMT…QIVDKPTSRR (67 aa). A helical membrane pass occupies residues 405–425; sequence IFTFLVINLMFMFVEMAYGIW. At 426 to 434 the chain is on the extracellular side; sequence TNSLGLITD. The chain crosses the membrane as a helical span at residues 435 to 455; it reads ACHMFFDATALFIALVAEVIS. At 456-469 the chain is on the cytoplasmic side; it reads QWKQNDKYSYGYGR. The chain crosses the membrane as a helical span at residues 470-490; that stretch reads FQVLSGFVNGIFLIFIAVTIL. At 491 to 507 the chain is on the extracellular side; the sequence is MESVERLLEPPEINTDK. Residues 508-528 form a helical membrane-spanning segment; that stretch reads LLLVSVLGFIINLIGIFSFHG. Residues 529–592 are Cytoplasmic-facing; the sequence is DHGHSHGGGG…GVFLHLLADT (64 aa). The segment at 532–566 is disordered; the sequence is HSHGGGGGHSHGGGEKKEKHHGHSHGGHGDHQQVT. Residues 593–613 traverse the membrane as a helical segment; it reads LGSVGVIVSSLIIQIWGYTLA. A topological domain (extracellular) is located at residue Asp614. Residues 615-635 traverse the membrane as a helical segment; the sequence is PICSLLISILIFLSVLPLIAN. Residues 636–770 are Cytoplasmic-facing; that stretch reads TAKTLLQCTP…SSSSHHHRHN (135 aa). The disordered stretch occupies residues 751–770; it reads DIHHNHSSSSSSSSHHHRHN.

This sequence belongs to the cation diffusion facilitator (CDF) transporter (TC 2.A.4) family. SLC30A subfamily.

The protein localises to the membrane. Its function is as follows. May be involved in zinc transport from the cytoplasm to either intracellular organelles or extracellular spaces. The protein is Probable zinc transporter protein DDB_G0291141 of Dictyostelium discoideum (Social amoeba).